Here is a 251-residue protein sequence, read N- to C-terminus: D-aminoacyl-tRNA deacylase (251 aa).

Belongs to the DtdA deacylase family. In terms of assembly, monomer. The cofactor is Zn(2+).

It carries out the reaction a D-aminoacyl-tRNA + H2O = a tRNA + a D-alpha-amino acid + H(+). The enzyme catalyses glycyl-tRNA(Ala) + H2O = tRNA(Ala) + glycine + H(+). Functionally, D-aminoacyl-tRNA deacylase with broad substrate specificity. By recycling D-aminoacyl-tRNA to D-amino acids and free tRNA molecules, this enzyme counteracts the toxicity associated with the formation of D-aminoacyl-tRNA entities in vivo. This is D-aminoacyl-tRNA deacylase from Pyrobaculum calidifontis (strain DSM 21063 / JCM 11548 / VA1).